The chain runs to 498 residues: Sugar transport protein 2 (498 aa).

Residues 1 to 22 (MAVGSMNVEEGTKAFPAKLTGQ) lie on the Cytoplasmic side of the membrane. 12 consecutive transmembrane segments (helical) span residues 23–43 (VFLC…DIGI), 80–100 (LLQL…FISS), 117–137 (IFFL…MLIG), 140–160 (ILLG…ISEI), 167–187 (GGLN…ASYV), 200–220 (YSLG…FFIH), 288–308 (LQFF…PVLF), 320–340 (ISTV…LLVV), 348–368 (LLME…GILL), 381–401 (AVPL…AWSW), 421–441 (GYFC…QFFL), and 450–470 (LLFF…VFFL). Residues 471-498 (PETKGVPIEEMAEKRWKTHPRWKKYFKD) lie on the Cytoplasmic side of the membrane.

The protein belongs to the major facilitator superfamily. Sugar transporter (TC 2.A.1.1) family. Pollen specific (at protein level).

The protein resides in the membrane. In terms of biological role, mediates an active uptake of hexoses, probably by sugar/hydrogen symport. Can transport glucose, 3-O-methylglucose, xylose, mannose, fructose and galactose. The protein is Sugar transport protein 2 (STP2) of Arabidopsis thaliana (Mouse-ear cress).